The chain runs to 487 residues: GTPase Der (487 aa).

EngA-type G domains lie at 3–167 (FTLA…EGFA) and 203–378 (LQIA…DIWN). GTP-binding positions include 9-16 (GRPNVGKS), 56-60 (DTAGL), 119-122 (NKAE), 209-216 (GRPNAGKS), 256-260 (DTAGM), and 321-324 (NKWD). Positions 379-463 (RRITTARLNT…PIRLTMRGQG (85 aa)) constitute a KH-like domain. Residues 451 to 487 (PGTPIRLTMRGQGDKNPFKERKFRTPSRLRKHLGKKD) are disordered. Residues 471–487 (RKFRTPSRLRKHLGKKD) are compositionally biased toward basic residues.

It belongs to the TRAFAC class TrmE-Era-EngA-EngB-Septin-like GTPase superfamily. EngA (Der) GTPase family. In terms of assembly, associates with the 50S ribosomal subunit.

In terms of biological role, GTPase that plays an essential role in the late steps of ribosome biogenesis. The polypeptide is GTPase Der (Cereibacter sphaeroides (strain ATCC 17029 / ATH 2.4.9) (Rhodobacter sphaeroides)).